We begin with the raw amino-acid sequence, 366 residues long: Outer membrane porin C 2 (366 aa).

Residues 1-21 (MKLKIVAVVVTGLLAANVAHA) form the signal peptide.

It belongs to the Gram-negative porin family. Homotrimer. Forms mixed heterotrimers with OmpF and with PhoE; other mixed heterotrimers are also probable.

The protein resides in the cell outer membrane. In terms of biological role, forms pores that allow passive diffusion of small molecules across the outer membrane. Plays a role in virulence. The chain is Outer membrane porin C 2 from Shigella flexneri serotype 5a (strain M90T).